We begin with the raw amino-acid sequence, 550 residues long: Protein UshA (550 aa).

The N-terminal stretch at 1–25 (MKFLKRGVALALLAAFALTTQPAQA) is a signal peptide. 7 residues coordinate Zn(2+): Asp41, His43, Asp84, Asn116, His217, His252, and Gln254. Cys258 and Cys275 are joined by a disulfide. Substrate is bound by residues Phe429 and 498–504 (FNATGGD).

Belongs to the 5'-nucleotidase family. As to quaternary structure, monomer. The cofactor is Zn(2+).

Its subcellular location is the periplasm. It carries out the reaction UDP-sugar + H2O = UMP + alpha-D-aldose 1-phosphate.. The enzyme catalyses a ribonucleoside 5'-phosphate + H2O = a ribonucleoside + phosphate. In terms of biological role, degradation of external UDP-glucose to uridine monophosphate and glucose-1-phosphate, which can then be used by the cell. The polypeptide is Protein UshA (ushA) (Salmonella pullorum).